Consider the following 249-residue polypeptide: Probable transcriptional regulatory protein Wbm0670 (249 aa).

It belongs to the TACO1 family.

It is found in the cytoplasm. This chain is Probable transcriptional regulatory protein Wbm0670, found in Wolbachia sp. subsp. Brugia malayi (strain TRS).